We begin with the raw amino-acid sequence, 300 residues long: Recombination-associated protein RdgC (300 aa).

This sequence belongs to the RdgC family.

It is found in the cytoplasm. Its subcellular location is the nucleoid. Functionally, may be involved in recombination. The sequence is that of Recombination-associated protein RdgC from Janthinobacterium sp. (strain Marseille) (Minibacterium massiliensis).